The sequence spans 357 residues: tRNA-specific 2-thiouridylase MnmA (357 aa).

ATP contacts are provided by residues 10–17 (GISGGVDS) and Ile-36. Cys-98 serves as the catalytic Nucleophile. A disulfide bond links Cys-98 and Cys-194. Residue Gly-122 coordinates ATP. The interval 144–146 (KDQ) is interaction with tRNA. Residue Cys-194 is the Cysteine persulfide intermediate of the active site. An interaction with tRNA region spans residues 303-304 (RY).

It belongs to the MnmA/TRMU family.

It localises to the cytoplasm. It carries out the reaction S-sulfanyl-L-cysteinyl-[protein] + uridine(34) in tRNA + AH2 + ATP = 2-thiouridine(34) in tRNA + L-cysteinyl-[protein] + A + AMP + diphosphate + H(+). Functionally, catalyzes the 2-thiolation of uridine at the wobble position (U34) of tRNA, leading to the formation of s(2)U34. The chain is tRNA-specific 2-thiouridylase MnmA from Chlorobium phaeovibrioides (strain DSM 265 / 1930) (Prosthecochloris vibrioformis (strain DSM 265)).